We begin with the raw amino-acid sequence, 257 residues long: Anamorsin homolog (257 aa).

The tract at residues 1-134 (MSDRKNVLFV…KVGSSDKVTL (134 aa)) is N-terminal SAM-like domain. The segment at 135 to 168 (NPEMKENVVSAWKLDDNNSETISEDDLLEADDLI) is linker. Residues C178, C187, C190, and C192 each contribute to the [2Fe-2S] cluster site. Residues 178-192 (CATTKKAKACKDCSC) form a fe-S binding site A region. Residues C218, C221, C229, and C232 each coordinate [4Fe-4S] cluster. 2 consecutive short sequence motifs (cx2C motif) follow at residues 218–221 (CGSC) and 229–232 (CASC). The interval 218–232 (CGSCYLGDAFRCASC) is fe-S binding site B.

The protein belongs to the anamorsin family. Monomer. [2Fe-2S] cluster serves as cofactor. Requires [4Fe-4S] cluster as cofactor.

The protein resides in the cytoplasm. The protein localises to the mitochondrion intermembrane space. In terms of biological role, component of the cytosolic iron-sulfur (Fe-S) protein assembly (CIA) machinery. Required for the maturation of extramitochondrial Fe-S proteins. Part of an electron transfer chain functioning in an early step of cytosolic Fe-S biogenesis, facilitating the de novo assembly of a [4Fe-4S] cluster on the cytosolic Fe-S scaffold complex. Electrons are transferred from NADPH via a FAD- and FMN-containing diflavin oxidoreductase. Together with the diflavin oxidoreductase, also required for the assembly of the diferric tyrosyl radical cofactor of ribonucleotide reductase (RNR), probably by providing electrons for reduction during radical cofactor maturation in the catalytic small subunit. The sequence is that of Anamorsin homolog from Acyrthosiphon pisum (Pea aphid).